We begin with the raw amino-acid sequence, 351 residues long: Holliday junction branch migration complex subunit RuvB (351 aa).

Positions M1 to D12 are enriched in acidic residues. Residues M1–E23 are disordered. The interval M1–Y191 is large ATPase domain (RuvB-L). ATP-binding positions include L30, R31, G72, K75, T76, S77, E138–F140, R181, Y191, and R228. T76 is a binding site for Mg(2+). The segment at E192 to D262 is small ATPAse domain (RuvB-S). A head domain (RuvB-H) region spans residues E265–D351. R320 and R325 together coordinate DNA.

It belongs to the RuvB family. In terms of assembly, homohexamer. Forms an RuvA(8)-RuvB(12)-Holliday junction (HJ) complex. HJ DNA is sandwiched between 2 RuvA tetramers; dsDNA enters through RuvA and exits via RuvB. An RuvB hexamer assembles on each DNA strand where it exits the tetramer. Each RuvB hexamer is contacted by two RuvA subunits (via domain III) on 2 adjacent RuvB subunits; this complex drives branch migration. In the full resolvosome a probable DNA-RuvA(4)-RuvB(12)-RuvC(2) complex forms which resolves the HJ.

The protein resides in the cytoplasm. It carries out the reaction ATP + H2O = ADP + phosphate + H(+). Functionally, the RuvA-RuvB-RuvC complex processes Holliday junction (HJ) DNA during genetic recombination and DNA repair, while the RuvA-RuvB complex plays an important role in the rescue of blocked DNA replication forks via replication fork reversal (RFR). RuvA specifically binds to HJ cruciform DNA, conferring on it an open structure. The RuvB hexamer acts as an ATP-dependent pump, pulling dsDNA into and through the RuvAB complex. RuvB forms 2 homohexamers on either side of HJ DNA bound by 1 or 2 RuvA tetramers; 4 subunits per hexamer contact DNA at a time. Coordinated motions by a converter formed by DNA-disengaged RuvB subunits stimulates ATP hydrolysis and nucleotide exchange. Immobilization of the converter enables RuvB to convert the ATP-contained energy into a lever motion, pulling 2 nucleotides of DNA out of the RuvA tetramer per ATP hydrolyzed, thus driving DNA branch migration. The RuvB motors rotate together with the DNA substrate, which together with the progressing nucleotide cycle form the mechanistic basis for DNA recombination by continuous HJ branch migration. Branch migration allows RuvC to scan DNA until it finds its consensus sequence, where it cleaves and resolves cruciform DNA. This Mycolicibacterium smegmatis (strain ATCC 700084 / mc(2)155) (Mycobacterium smegmatis) protein is Holliday junction branch migration complex subunit RuvB.